A 487-amino-acid polypeptide reads, in one-letter code: Serine/threonine-protein kinase BSK7 (487 aa).

Glycine 2 carries N-myristoyl glycine lipidation. Positions 59–325 (ENIVSEHGEK…DLETPSHQLM (267 aa)) constitute a Protein kinase domain. ATP-binding positions include 65-73 (HGEKAPNVV) and lysine 87. The active-site Proton acceptor is the aspartate 181.

The protein belongs to the protein kinase superfamily. Ser/Thr protein kinase family.

It is found in the cell membrane. The catalysed reaction is L-seryl-[protein] + ATP = O-phospho-L-seryl-[protein] + ADP + H(+). It catalyses the reaction L-threonyl-[protein] + ATP = O-phospho-L-threonyl-[protein] + ADP + H(+). Probable serine/threonine kinase that acts as a positive regulator of brassinosteroid (BR) signaling downstream of the receptor kinase BRI1. Functions redundantly with BSK3, BSK5, BSK6 and BSK8. The protein is Serine/threonine-protein kinase BSK7 of Arabidopsis thaliana (Mouse-ear cress).